The following is a 103-amino-acid chain: Phosphoribosyl-ATP pyrophosphatase (103 aa).

The disordered stretch occupies residues 84–103 (LQSREGKLSKTSDRKEINDL).

It belongs to the PRA-PH family.

It is found in the cytoplasm. It catalyses the reaction 1-(5-phospho-beta-D-ribosyl)-ATP + H2O = 1-(5-phospho-beta-D-ribosyl)-5'-AMP + diphosphate + H(+). Its pathway is amino-acid biosynthesis; L-histidine biosynthesis; L-histidine from 5-phospho-alpha-D-ribose 1-diphosphate: step 2/9. The chain is Phosphoribosyl-ATP pyrophosphatase (hisE) from Listeria innocua serovar 6a (strain ATCC BAA-680 / CLIP 11262).